Reading from the N-terminus, the 113-residue chain is Iron-sulfur cluster assembly protein CyaY (113 aa).

The protein belongs to the frataxin family.

In terms of biological role, involved in iron-sulfur (Fe-S) cluster assembly. May act as a regulator of Fe-S biogenesis. This chain is Iron-sulfur cluster assembly protein CyaY, found in Ralstonia nicotianae (strain ATCC BAA-1114 / GMI1000) (Ralstonia solanacearum).